We begin with the raw amino-acid sequence, 449 residues long: MSRNYFGTDGIRGRANGLITPELALKVGQAAGLLFQRGEHRHRVVIGKDTRLSGYMIEYAMVAGFTSVGMDVLLVGPMPTPAVAMLTKSMRADLGVMISASHNLFEDNGIKLFGPQGFKLSDDVEKQIEQLLDESLDKKLAQSASLGRARRIDGVHDRYIEFAKRTLPRDLSLDGLRVVVDCANGAAYKVVPEALWELGADVISIGVEPDGFNINKECGSTSPEALCRKVREMRADIGIALDGDADRVILVDERGHIVDGDQLLAVIAQSWKEDGRLARPGIVATVMSNLGLERFLQGQGLELVRTPVGDRYVLERMLADGYNLGGEQSGHIILSDYATTGDGFVAALQVLATVQRLRRPVSEVCHKFDPLPQILKNVRYRSGKPLDADAVKSAIDTGQKRLNGHGRLLVRSSGTEPVIRVMGEGDDRDLVEEVVDDIVTAVGNAAAAA.

The active-site Phosphoserine intermediate is S101. Residues S101, D242, D244, and D246 each coordinate Mg(2+). S101 is subject to Phosphoserine.

The protein belongs to the phosphohexose mutase family. Mg(2+) is required as a cofactor. Activated by phosphorylation.

The catalysed reaction is alpha-D-glucosamine 1-phosphate = D-glucosamine 6-phosphate. In terms of biological role, catalyzes the conversion of glucosamine-6-phosphate to glucosamine-1-phosphate. The polypeptide is Phosphoglucosamine mutase (Bradyrhizobium sp. (strain BTAi1 / ATCC BAA-1182)).